The following is a 2563-amino-acid chain: Compactin diketide synthase mlcB (2563 aa).

The region spanning 29 to 450 (STPIAIVGMG…GSNAHVILES (422 aa)) is the Ketosynthase family 3 (KS3) domain. Residues cysteine 202, histidine 337, and histidine 372 each act as for beta-ketoacyl synthase activity in the active site. The tract at residues 568–915 (VFTGQGAQWH…TELISKGYGL (348 aa)) is acyl and malonyl transferase. Serine 658 (for malonyltransferase activity) is an active-site residue. Residues 951 to 960 (EPRGSRESKQ) show a composition bias toward basic and acidic residues. A disordered region spans residues 951-971 (EPRGSRESKQRTHPPHTLIGS). Residues 966–1103 (HTLIGSRESL…GLIRSESERS (138 aa)) are N-terminal hotdog fold. The PKS/mFAS DH domain maps to 966–1284 (HTLIGSRESL…FQSVGSSFSD (319 aa)). The active-site Proton acceptor; for dehydratase activity is histidine 998. The tract at residues 998–1010 (HVVGSSIIFPGAG) is dehydratase-like. A C-terminal hotdog fold region spans residues 1121–1284 (DNRSIDPNDL…FQSVGSSFSD (164 aa)). Aspartate 1187 serves as the catalytic Proton donor; for dehydratase activity. The interval 1542–1579 (YDVVVACQVLHATRCMKRTLSNVRKLLKPGGNLILVET) is methyltransferase. A Carrier domain is found at 2485–2562 (EAISIVLKAM…GLVELVVAKC (78 aa)). Serine 2522 carries the post-translational modification O-(pantetheine 4'-phosphoryl)serine.

It depends on pantetheine 4'-phosphate as a cofactor.

The catalysed reaction is holo-[2-methylbutanoate polyketide synthase] + 2 malonyl-CoA + S-adenosyl-L-methionine + 2 NADPH + 3 H(+) = (S)-2-methylbutanoyl-[2-methylbutanoate polyketide synthase] + S-adenosyl-L-homocysteine + 2 CO2 + 2 NADP(+) + 2 CoA + H2O. The protein operates within polyketide biosynthesis. In terms of biological role, diketide synthase; part of the gene cluster that mediates the biosynthesis of compactin, also known as mevastatin or ML-236B, and which acts as a potent competitive inhibitor of HMG-CoA reductase. Compactin biosynthesis is performed in two stages. The first stage is catalyzed by the nonaketide synthase mlcA, which belongs to type I polyketide synthases and catalyzes the iterative nine-step formation of the polyketide. This PKS stage is completed by the action of dehydrogenase mlcG, which catalyzes the NADPH-dependent reduction of the unsaturated tetra-, penta- and heptaketide intermediates that arise during the mlcA-mediated biosynthesis of the nonaketide chain and leads to dihydro-ML-236C carboxylate. Covalently bound dihydro-ML-236C carboxylate is released from mlcA by the mlcF esterase. Conversion of dihydro-ML-236C carboxylate into ML-236A carboxylate is subsequently performed with the participation of molecular oxygen and P450 monoogygenase mlcC. Finally, mlcH performs the conversion of ML-236A carboxylate to ML-236B/compactin carboxylate through the addition of the side-chain diketide moiety produced by the diketide synthase mlcB. This chain is Compactin diketide synthase mlcB (mlcB), found in Penicillium citrinum.